The sequence spans 295 residues: MNNSSKLCRKTSFPRSNIFCNLVDKIVKRPSLQFLGQWGYHCYEPRIYRTLAKILRYVDLDGFDILLTDYIAFVEKSGHRFELNFNLEFTEICVNTILYWVFARKGNPDFVELLLKKTKDYVQDRSCSLALIWRTFTPVYCPSPLSGITPLLYVAQTRQSNILKILLQYGILEREKNPINIVLTILLYPSRVRIMVDHELIDIQEDAKTCLMLCSRVLSTISVREIETQLSLGRRPIIQNWLDYIPPTRYKDPCELVHLCRITIRTQLLANNMLPNGIFSLLIPTRLQNFLNLES.

The ANK repeat unit spans residues 146–176 (SGITPLLYVAQTRQSNILKILLQYGILEREK). The SOCS box domain maps to 243–295 (DYIPPTRYKDPCELVHLCRITIRTQLLANNMLPNGIFSLLIPTRLQNFLNLES).

The protein belongs to the ankyrin SOCS box (ASB) family. In terms of tissue distribution, specifically expressed in testis. Localizes to spermatogenic cells in testis, with highest expression in round spermatids and condensing spermatids and lower expression in pachytene spermatocytes.

It functions in the pathway protein modification; protein ubiquitination. May be a substrate-recognition component of a SCF-like ECS (Elongin-Cullin-SOCS-box protein) E3 ubiquitin-protein ligase complex which mediates the ubiquitination and subsequent proteasomal degradation of target proteins. The chain is Ankyrin repeat and SOCS box protein 17 (Asb17) from Mus musculus (Mouse).